The chain runs to 892 residues: Histone deacetylase 4 (892 aa).

The disordered stretch occupies residues 145–225 (NGNLSNLSVP…MSNVNGHDNS (81 aa)). 2 stretches are compositionally biased toward polar residues: residues 171-192 (SAPTSSRKSDLPRTNSTTISQL) and 208-222 (ESNSQSNLMSNVNGH). Residues 481–822 (STGLGYDPLM…VQALIGESDD (342 aa)) are histone deacetylase. H628 is a catalytic residue.

Belongs to the histone deacetylase family. HD type 2 subfamily.

The protein localises to the nucleus. The enzyme catalyses N(6)-acetyl-L-lysyl-[histone] + H2O = L-lysyl-[histone] + acetate. Responsible for the deacetylation of lysine residues on the N-terminal part of the core histones (H2A, H2B, H3 and H4). Histone deacetylation gives a tag for epigenetic repression and plays an important role in transcriptional regulation, cell cycle progression and developmental events. Histone deacetylases act via the formation of large multiprotein complexes. The chain is Histone deacetylase 4 (hda-4) from Caenorhabditis briggsae.